The chain runs to 103 residues: Small ribosomal subunit protein uS10 (103 aa).

The protein belongs to the universal ribosomal protein uS10 family. In terms of assembly, part of the 30S ribosomal subunit.

Involved in the binding of tRNA to the ribosomes. The sequence is that of Small ribosomal subunit protein uS10 from Magnetococcus marinus (strain ATCC BAA-1437 / JCM 17883 / MC-1).